We begin with the raw amino-acid sequence, 500 residues long: Farnesylcysteine lyase (500 aa).

A signal peptide spans 1–24 (MKDFPIAISLLFALLSPVLLPCSG). 4 N-linked (GlcNAc...) asparagine glycosylation sites follow: N56, N113, N211, and N281.

Belongs to the prenylcysteine oxidase family. The cofactor is FAD. Expressed in seedilings, flowers, stems, leaves and roots.

It is found in the lysosome. The enzyme catalyses S-(2E,6E)-farnesyl-L-cysteine + O2 + H2O = (2E,6E)-farnesal + L-cysteine + H2O2. Involved in the degradation of prenylcysteine. Cleaves specifically the thioether bond of S-farnesyl-L-cysteine and has no activity with S-geranylgeranyl-L-cysteine. Also recognizes N-acetyl-farnesylcysteine and may have a role in deprenylation of farnesylated proteins. The protein is Farnesylcysteine lyase of Arabidopsis thaliana (Mouse-ear cress).